We begin with the raw amino-acid sequence, 642 residues long: Threonine--tRNA ligase (642 aa).

Positions 1-61 constitute a TGS domain; it reads MPVITLPDGS…DTDSELSIIT (61 aa). A catalytic region spans residues 243–534; that stretch reads DHRKIGKQLD…LIEEYAGKFP (292 aa). Residues cysteine 334, histidine 385, and histidine 511 each coordinate Zn(2+).

It belongs to the class-II aminoacyl-tRNA synthetase family. Homodimer. It depends on Zn(2+) as a cofactor.

It is found in the cytoplasm. The enzyme catalyses tRNA(Thr) + L-threonine + ATP = L-threonyl-tRNA(Thr) + AMP + diphosphate + H(+). Functionally, catalyzes the attachment of threonine to tRNA(Thr) in a two-step reaction: L-threonine is first activated by ATP to form Thr-AMP and then transferred to the acceptor end of tRNA(Thr). Also edits incorrectly charged L-seryl-tRNA(Thr). This chain is Threonine--tRNA ligase, found in Shewanella sediminis (strain HAW-EB3).